The sequence spans 196 residues: Peptidyl-tRNA hydrolase (196 aa).

Y18 provides a ligand contact to tRNA. The Proton acceptor role is filled by H23. TRNA is bound by residues F69, N71, and N117.

Belongs to the PTH family. As to quaternary structure, monomer.

Its subcellular location is the cytoplasm. The catalysed reaction is an N-acyl-L-alpha-aminoacyl-tRNA + H2O = an N-acyl-L-amino acid + a tRNA + H(+). Its function is as follows. Hydrolyzes ribosome-free peptidyl-tRNAs (with 1 or more amino acids incorporated), which drop off the ribosome during protein synthesis, or as a result of ribosome stalling. In terms of biological role, catalyzes the release of premature peptidyl moieties from peptidyl-tRNA molecules trapped in stalled 50S ribosomal subunits, and thus maintains levels of free tRNAs and 50S ribosomes. In Aliivibrio fischeri (strain MJ11) (Vibrio fischeri), this protein is Peptidyl-tRNA hydrolase.